The primary structure comprises 141 residues: Large ribosomal subunit protein uL11 (141 aa).

This sequence belongs to the universal ribosomal protein uL11 family. Part of the ribosomal stalk of the 50S ribosomal subunit. Interacts with L10 and the large rRNA to form the base of the stalk. L10 forms an elongated spine to which L12 dimers bind in a sequential fashion forming a multimeric L10(L12)X complex. Post-translationally, one or more lysine residues are methylated.

Forms part of the ribosomal stalk which helps the ribosome interact with GTP-bound translation factors. The polypeptide is Large ribosomal subunit protein uL11 (Streptococcus uberis (strain ATCC BAA-854 / 0140J)).